Consider the following 522-residue polypeptide: BTB/POZ domain-containing protein 16 (522 aa).

The region spanning 166-222 (INDPAVTRVAFALALKNLYMKEVEMTVDNVLGVLASAHILQFNRLFQKCVNMMMNRL) is the BTB domain.

This chain is BTB/POZ domain-containing protein 16 (Btbd16), found in Mus musculus (Mouse).